The chain runs to 332 residues: Glyceraldehyde-3-phosphate dehydrogenase (332 aa).

NAD(+)-binding positions include 10–11 (RI), Asp36, Lys81, and Ser116. Residues 150-152 (SCT), Thr181, Arg197, 210-211 (TK), and Arg233 each bind D-glyceraldehyde 3-phosphate. The active-site Nucleophile is Cys151. Asn314 is a binding site for NAD(+).

Belongs to the glyceraldehyde-3-phosphate dehydrogenase family. Homotetramer.

Its subcellular location is the cytoplasm. The catalysed reaction is D-glyceraldehyde 3-phosphate + phosphate + NAD(+) = (2R)-3-phospho-glyceroyl phosphate + NADH + H(+). It functions in the pathway carbohydrate degradation; glycolysis; pyruvate from D-glyceraldehyde 3-phosphate: step 1/5. Functionally, catalyzes the oxidative phosphorylation of glyceraldehyde 3-phosphate (G3P) to 1,3-bisphosphoglycerate (BPG) using the cofactor NAD. The first reaction step involves the formation of a hemiacetal intermediate between G3P and a cysteine residue, and this hemiacetal intermediate is then oxidized to a thioester, with concomitant reduction of NAD to NADH. The reduced NADH is then exchanged with the second NAD, and the thioester is attacked by a nucleophilic inorganic phosphate to produce BPG. This Helicobacter pylori (strain J99 / ATCC 700824) (Campylobacter pylori J99) protein is Glyceraldehyde-3-phosphate dehydrogenase (gapA).